We begin with the raw amino-acid sequence, 247 residues long: Carboxy-S-adenosyl-L-methionine synthase (247 aa).

S-adenosyl-L-methionine is bound by residues Tyr40, 65–67 (GCS), 90–91 (DN), 122–123 (DI), Asn137, and Arg204.

The protein belongs to the class I-like SAM-binding methyltransferase superfamily. Cx-SAM synthase family. As to quaternary structure, homodimer.

It carries out the reaction prephenate + S-adenosyl-L-methionine = carboxy-S-adenosyl-L-methionine + 3-phenylpyruvate + H2O. Its function is as follows. Catalyzes the conversion of S-adenosyl-L-methionine (SAM) to carboxy-S-adenosyl-L-methionine (Cx-SAM). This chain is Carboxy-S-adenosyl-L-methionine synthase, found in Stutzerimonas stutzeri (strain A1501) (Pseudomonas stutzeri).